The following is a 321-amino-acid chain: o-succinylbenzoate synthase (321 aa).

The active-site Proton donor is the lysine 134. Residues aspartate 162, glutamate 191, and aspartate 214 each contribute to the Mg(2+) site. The active-site Proton acceptor is the lysine 236.

The protein belongs to the mandelate racemase/muconate lactonizing enzyme family. MenC type 1 subfamily. It depends on a divalent metal cation as a cofactor.

The enzyme catalyses (1R,6R)-6-hydroxy-2-succinyl-cyclohexa-2,4-diene-1-carboxylate = 2-succinylbenzoate + H2O. It functions in the pathway quinol/quinone metabolism; 1,4-dihydroxy-2-naphthoate biosynthesis; 1,4-dihydroxy-2-naphthoate from chorismate: step 4/7. Its pathway is quinol/quinone metabolism; menaquinone biosynthesis. Its function is as follows. Converts 2-succinyl-6-hydroxy-2,4-cyclohexadiene-1-carboxylate (SHCHC) to 2-succinylbenzoate (OSB). This is o-succinylbenzoate synthase from Klebsiella pneumoniae (strain 342).